Here is a 369-residue protein sequence, read N- to C-terminus: Ribonuclease 3 (369 aa).

Positions 6 to 142 (IGFVQSSINY…IIGAVAADCD (137 aa)) constitute an RNase III domain. Glu-46 is a Mg(2+) binding site. Residue Asp-50 is part of the active site. Mg(2+) contacts are provided by Asp-128 and Glu-131. Residue Glu-131 is part of the active site. Residues 272-341 (NPASTLHELF…SLKLLKFIAK (70 aa)) enclose the DRBM domain.

The protein belongs to the ribonuclease III family. As to quaternary structure, homodimer. It depends on Mg(2+) as a cofactor.

The protein resides in the cytoplasm. It catalyses the reaction Endonucleolytic cleavage to 5'-phosphomonoester.. Digests double-stranded RNA. Involved in the processing of primary rRNA transcript to yield the immediate precursors to the large and small rRNAs (23S and 16S). Processes some mRNAs, and tRNAs when they are encoded in the rRNA operon. Processes pre-crRNA and tracrRNA of type II CRISPR loci if present in the organism. The protein is Ribonuclease 3 (rnc) of Treponema succinifaciens (strain ATCC 33096 / DSM 2489 / 6091).